The chain runs to 60 residues: Large ribosomal subunit protein bL33 (60 aa).

It belongs to the bacterial ribosomal protein bL33 family.

This chain is Large ribosomal subunit protein bL33, found in Cytophaga hutchinsonii (strain ATCC 33406 / DSM 1761 / CIP 103989 / NBRC 15051 / NCIMB 9469 / D465).